Here is a 404-residue protein sequence, read N- to C-terminus: Lissencephaly-1 homolog (404 aa).

A LisH domain is found at 7-39 (QKEEINRAIAEYMQNNGYSESFSVFLKESSLSE). Residues 54-81 (TTVLRLQRKVNDLESKLQESQREINHGA) are a coiled coil. The span at 69 to 89 (KLQESQREINHGAPTRDKRQA) shows a compositional bias: basic and acidic residues. Positions 69–90 (KLQESQREINHGAPTRDKRQAA) are disordered. 7 WD repeats span residues 104–145 (GHRL…RTLK), 146–185 (GHTDAVNDIAIDAAGKQLVSCSSDLSIKLWDFGQTYDCLK), 189–228 (GHEHTVSSVTFLPTGDFVLSASRDHTIKQWDISTGYCVYT), 231–270 (GHNDWVRMIRISNDGTLFASASLDQTVTVWSFATKSAKLV), 273–327 (DHEH…VLFT), 330–369 (AHENWVRGLAFHPKGKYLISVADDKTLRVWELSAQRCMKA), and 372–404 (AHEHFVSTVAFHQTSPFVITGSVDMSCKVWECR).

The protein belongs to the WD repeat LIS1/nudF family. In terms of assembly, component of a dynein-regulating complex composed of at least lis-1 and nud-2. Interacts with nud-2; the interaction is direct. As to expression, expressed in all classes of neurons in the ventral cord. Expressed in the multinucleate spermathecal valves and adult seam cells.

The protein resides in the cytoplasm. The protein localises to the cytoskeleton. Its subcellular location is the microtubule organizing center. It is found in the centrosome. It localises to the chromosome. The protein resides in the centromere. The protein localises to the kinetochore. Its subcellular location is the nucleus envelope. Positively regulates the activity of the minus-end directed microtubule motor protein dynein. May enhance dynein-mediated microtubule sliding by targeting dynein to the microtubule plus end. Required for several dynein- and microtubule-dependent processes such as nuclear migration during cell division. Part of a complex with nud-2, which is recruited to the nuclear envelope by unc-83, where, in turn, it recruits dynein to the nuclear surface and regulates nuclear migration in hypodermal precursor cells. Plays a role in GABAergic synaptic vesicle localization in the ventral nerve cord. Required for neuronal cell differentiation. This chain is Lissencephaly-1 homolog, found in Caenorhabditis elegans.